The sequence spans 157 residues: Transcription elongation factor GreA (157 aa).

Belongs to the GreA/GreB family.

Functionally, necessary for efficient RNA polymerase transcription elongation past template-encoded arresting sites. The arresting sites in DNA have the property of trapping a certain fraction of elongating RNA polymerases that pass through, resulting in locked ternary complexes. Cleavage of the nascent transcript by cleavage factors such as GreA or GreB allows the resumption of elongation from the new 3'terminus. GreA releases sequences of 2 to 3 nucleotides. The protein is Transcription elongation factor GreA of Maricaulis maris (strain MCS10) (Caulobacter maris).